A 216-amino-acid polypeptide reads, in one-letter code: UPF0502 protein Ent638_1581 (216 aa).

Belongs to the UPF0502 family.

The chain is UPF0502 protein Ent638_1581 from Enterobacter sp. (strain 638).